Here is a 296-residue protein sequence, read N- to C-terminus: 110 kDa antigen (296 aa).

The 1; approximate repeat unit spans residues 132 to 143 (EETQKTVEPEQI). A 13.5 X 12 AA approximate tandem repeats of E-E-T-Q-K-T-V-E-P-E-Q-T region spans residues 132–296 (EETQKTVEPE…TQETQNTVEP (165 aa)). The tract at residues 133-296 (ETQKTVEPEQ…TQETQNTVEP (164 aa)) is disordered. The stretch at 144-155 (EETQNTVEPEQT) is one 2; approximate repeat. The stretch at 156–167 (EETQKTVEPEQT) is repeat 3. A 4; approximate repeat occupies 168–179 (EETQNTVEPEQI). The stretch at 180 to 191 (EETQKTVEPEQT) is repeat 5. Residues 181–271 (ETQKTVEPEQ…QTEETQKTVE (91 aa)) are compositionally biased toward basic and acidic residues. The 6; approximate repeat unit spans residues 192 to 203 (EEAQKTVEPEQT). A run of 6 repeats spans residues 204-215 (EETQKTVEPEQT), 216-227 (EETQKTVEPEQT), 228-239 (EETQKTVEPEQT), 240-251 (EETQKTVEPEQT), 252-263 (EETQKTVEPEQT), and 264-275 (EETQKTVEPEQT). The 13; approximate repeat unit spans residues 276 to 287 (EETQNTVEPEPT). Residues 277 to 296 (ETQNTVEPEPTQETQNTVEP) show a composition bias toward polar residues. A 14; truncated repeat occupies 288 to 293 (QETQNT).

In Plasmodium knowlesi, this protein is 110 kDa antigen.